The primary structure comprises 189 residues: NADH-quinone oxidoreductase subunit B (189 aa).

Positions 39, 40, 104, and 135 each coordinate [4Fe-4S] cluster.

The protein belongs to the complex I 20 kDa subunit family. In terms of assembly, NDH-1 is composed of 14 different subunits. Subunits NuoB, C, D, E, F, and G constitute the peripheral sector of the complex. The cofactor is [4Fe-4S] cluster.

It is found in the cell inner membrane. It catalyses the reaction a quinone + NADH + 5 H(+)(in) = a quinol + NAD(+) + 4 H(+)(out). Its function is as follows. NDH-1 shuttles electrons from NADH, via FMN and iron-sulfur (Fe-S) centers, to quinones in the respiratory chain. The immediate electron acceptor for the enzyme in this species is believed to be a menaquinone. Couples the redox reaction to proton translocation (for every two electrons transferred, four hydrogen ions are translocated across the cytoplasmic membrane), and thus conserves the redox energy in a proton gradient. The polypeptide is NADH-quinone oxidoreductase subunit B (Chlorobium phaeovibrioides (strain DSM 265 / 1930) (Prosthecochloris vibrioformis (strain DSM 265))).